The primary structure comprises 463 residues: Nuclear hormone receptor family member nhr-3 (463 aa).

The segment at residues 50–125 (STICSVCCDE…VGMEPDAIRP (76 aa)) is a DNA-binding region (nuclear receptor). 2 NR C4-type zinc fingers span residues 53–73 (CSVCCDEASGRHYGVVACFGC) and 89–113 (CRYSKKCRIDKAGRNVCRSCRFQKC). Basic and acidic residues predominate over residues 121 to 131 (DAIRPDRDKTG). The tract at residues 121 to 143 (DAIRPDRDKTGRQKNPRRNTEGS) is disordered. An NR LBD domain is found at 199–462 (EIENIVIQLQ…VLEELLFLDR (264 aa)).

The protein belongs to the nuclear hormone receptor family.

Its subcellular location is the nucleus. Orphan nuclear receptor. This is Nuclear hormone receptor family member nhr-3 (nhr-3) from Caenorhabditis elegans.